The chain runs to 93 residues: MSGRRSRSRQSSGTSRISEDQINDLIIKLQQLLPELRDSRRSDKVSAARVLQDTCNYIRNLHREVDDLSERLSELLANSDTAQAALIRSLLTQ.

Residues S6–L61 form the bHLH domain.

Homodimer. Interacts with BHLH 147, BHLH148, BHLH149, BHLH150 and IBH1. Interacts with SIEL. In terms of tissue distribution, expressed in root and shoot meristems, and young siliques. Low levels detected in all aerial tissues.

The protein localises to the nucleus. The protein resides in the cytoplasm. In terms of biological role, atypical and probable non DNA-binding bHLH transcription factor required for MONOPTEROS-dependent root initiation in embryo. Promotes the correct definition of the hypophysis cell division plane. Transcriptionally controlled by MONOPTEROS. Moves from its site of synthesis in pro-embryos cells into the hypophysis. Regulates brassinosteroid (BR) signaling by sequestering negative BR signaling components. May function as positive regulator of gibberellin signaling. May play a role in the regulation of light signaling and possibly auxin signaling. The sequence is that of Transcription factor PRE3 (PRE3) from Arabidopsis thaliana (Mouse-ear cress).